The following is a 329-amino-acid chain: GTPase Obg (329 aa).

The Obg domain occupies 1–159 (MQFIDEAKIF…MWVWLHLKLL (159 aa)). One can recognise an OBG-type G domain in the interval 160–327 (SDVGLVGLPN…LLANILSELQ (168 aa)). Residues 166–173 (GLPNAGKS), 191–195 (FTTLT), 212–215 (DIPG), 279–282 (TKTD), and 308–310 (SSY) each bind GTP. The Mg(2+) site is built by serine 173 and threonine 193.

The protein belongs to the TRAFAC class OBG-HflX-like GTPase superfamily. OBG GTPase family. Monomer. The cofactor is Mg(2+).

It localises to the cytoplasm. Functionally, an essential GTPase which binds GTP, GDP and possibly (p)ppGpp with moderate affinity, with high nucleotide exchange rates and a fairly low GTP hydrolysis rate. Plays a role in control of the cell cycle, stress response, ribosome biogenesis and in those bacteria that undergo differentiation, in morphogenesis control. This is GTPase Obg from Orientia tsutsugamushi (strain Boryong) (Rickettsia tsutsugamushi).